The following is a 341-amino-acid chain: Two-component response regulator EHD1 (341 aa).

Residues 12–127 (RVLVIDDDCS…ELSNIWQHIF (116 aa)) enclose the Response regulatory domain. Asp-63 is modified (4-aspartylphosphate). In terms of domain architecture, HTH myb-type spans 195–254 (DLGKSRLTWTTQLHRQFIAAVNHLGEDKAVPKKILGIMKVKHLTREQVASHLQKYRMQLK). Positions 225–250 (PKKILGIMKVKHLTREQVASHLQKYR) form a DNA-binding region, H-T-H motif.

Post-translationally, two-component system major event consists of a His-to-Asp phosphorelay between a sensor histidine kinase (HK) and a response regulator (RR). In plants, the His-to-Asp phosphorelay involves an additional intermediate named Histidine-containing phosphotransfer protein (HPt). This multistep phosphorelay consists of a His-Asp-His-Asp sequential transfer of a phosphate group between first a His and an Asp of the HK protein, followed by the transfer to a conserved His of the HPt protein and finally the transfer to an Asp in the receiver domain of the RR protein.

It is found in the nucleus. In terms of biological role, transcriptional activator that acts as a floral inducer to promote short-day (SD) flowering pathway. Activates Hd3a and other FT-like genes independently from Hd1. May also activate MADS-box transcription factors involved in flowering regulation. This Oryza sativa subsp. indica (Rice) protein is Two-component response regulator EHD1 (EHD1).